Here is a 389-residue protein sequence, read N- to C-terminus: Phosphopentomutase (389 aa).

6 residues coordinate Mn(2+): Asp-12, Asp-284, His-289, Asp-325, His-326, and His-337.

It belongs to the phosphopentomutase family. It depends on Mn(2+) as a cofactor.

It is found in the cytoplasm. It carries out the reaction 2-deoxy-alpha-D-ribose 1-phosphate = 2-deoxy-D-ribose 5-phosphate. The enzyme catalyses alpha-D-ribose 1-phosphate = D-ribose 5-phosphate. The protein operates within carbohydrate degradation; 2-deoxy-D-ribose 1-phosphate degradation; D-glyceraldehyde 3-phosphate and acetaldehyde from 2-deoxy-alpha-D-ribose 1-phosphate: step 1/2. Its function is as follows. Isomerase that catalyzes the conversion of deoxy-ribose 1-phosphate (dRib-1-P) and ribose 1-phosphate (Rib-1-P) to deoxy-ribose 5-phosphate (dRib-5-P) and ribose 5-phosphate (Rib-5-P), respectively. This is Phosphopentomutase from Anaeromyxobacter sp. (strain Fw109-5).